A 344-amino-acid polypeptide reads, in one-letter code: Dihydroorotase (344 aa).

H14 and H16 together coordinate Zn(2+). Substrate is bound by residues 16–18 (HLR) and N42. Residues K100, H137, and H175 each coordinate Zn(2+). N6-carboxylysine is present on K100. Residue H137 coordinates substrate. L220 lines the substrate pocket. D248 serves as a coordination point for Zn(2+). D248 is a catalytic residue. The substrate site is built by H252 and A264.

This sequence belongs to the metallo-dependent hydrolases superfamily. DHOase family. Class II DHOase subfamily. In terms of assembly, homodimer. Zn(2+) is required as a cofactor.

The enzyme catalyses (S)-dihydroorotate + H2O = N-carbamoyl-L-aspartate + H(+). The protein operates within pyrimidine metabolism; UMP biosynthesis via de novo pathway; (S)-dihydroorotate from bicarbonate: step 3/3. Catalyzes the reversible cyclization of carbamoyl aspartate to dihydroorotate. The protein is Dihydroorotase of Cupriavidus necator (strain ATCC 17699 / DSM 428 / KCTC 22496 / NCIMB 10442 / H16 / Stanier 337) (Ralstonia eutropha).